A 139-amino-acid chain; its full sequence is Nucleoside diphosphate kinase (139 aa).

Residues K10, F58, R86, T92, R104, and N114 each coordinate ATP. H117 acts as the Pros-phosphohistidine intermediate in catalysis.

Belongs to the NDK family. As to quaternary structure, homotetramer. Mg(2+) serves as cofactor.

It is found in the cytoplasm. It catalyses the reaction a 2'-deoxyribonucleoside 5'-diphosphate + ATP = a 2'-deoxyribonucleoside 5'-triphosphate + ADP. The enzyme catalyses a ribonucleoside 5'-diphosphate + ATP = a ribonucleoside 5'-triphosphate + ADP. In terms of biological role, major role in the synthesis of nucleoside triphosphates other than ATP. The ATP gamma phosphate is transferred to the NDP beta phosphate via a ping-pong mechanism, using a phosphorylated active-site intermediate. This Rhodococcus erythropolis (strain PR4 / NBRC 100887) protein is Nucleoside diphosphate kinase.